The primary structure comprises 259 residues: Phosphatidylinositol transfer protein 2 (259 aa).

Positions leucine 231 to lysine 259 form a coiled coil.

The protein belongs to the PtdIns transfer protein family. PI transfer class IIA subfamily.

It is found in the cytoplasm. The protein resides in the golgi apparatus. Catalyzes the transfer of PtdIns and phosphatidylcholine between membranes. This Dictyostelium discoideum (Social amoeba) protein is Phosphatidylinositol transfer protein 2 (pitB).